The chain runs to 224 residues: Propanediol dehydratase medium subunit (224 aa).

Positions 1–18 (MEINEKLLRQIIEDVLSE) are targets protein to the BMC.

The protein belongs to the diol/glycerol dehydratase medium subunit family. In terms of assembly, the propanediol dehydratase enzyme is a heterotrimeric complex composed of a large (PduC), a medium (PduD) and a small (PduE) subunit. Adenosylcob(III)alamin serves as cofactor.

The protein localises to the bacterial microcompartment. The enzyme catalyses propane-1,2-diol = propanal + H2O. The protein operates within polyol metabolism; 1,2-propanediol degradation. Part of the PduCDE complex that catalyzes the dehydration of 1,2-propanediol (1,2-PD) to propionaldehyde. This subunit is directly targeted to the bacterial microcompartment (BMC). Its function is as follows. Expression of a cosmid containing the full 21-gene pdu operon in E.coli allows E.coli to grow on 1,2-propanediol (1,2-PD) with the appearance of BMCs in its cytoplasm. Functionally, the 1,2-PD-specific bacterial microcompartment (BMC) concentrates low levels of 1,2-PD catabolic enzymes, concentrates volatile reaction intermediates thus enhancing pathway flux and keeps the level of toxic, mutagenic propionaldehyde low. The polypeptide is Propanediol dehydratase medium subunit (Citrobacter freundii).